We begin with the raw amino-acid sequence, 424 residues long: Tyrosine--tRNA ligase (424 aa).

Tyrosine 37 provides a ligand contact to L-tyrosine. The 'HIGH' region motif lies at 42-51; the sequence is PTADSLHLGH. N6-acetyllysine is present on lysine 144. The L-tyrosine site is built by tyrosine 175 and glutamine 179. The 'KMSKS' region motif lies at 235-239; it reads KFGKT. Residue lysine 238 coordinates ATP. One can recognise an S4 RNA-binding domain in the interval 357-414; it reads ADLMQALVDSELQPSRGQARKTIASNAITINGEKQSDPEYFFKEEDRLFGRFTLLRRG.

It belongs to the class-I aminoacyl-tRNA synthetase family. TyrS type 1 subfamily. Homodimer.

The protein localises to the cytoplasm. The enzyme catalyses tRNA(Tyr) + L-tyrosine + ATP = L-tyrosyl-tRNA(Tyr) + AMP + diphosphate + H(+). Functionally, catalyzes the attachment of tyrosine to tRNA(Tyr) in a two-step reaction: tyrosine is first activated by ATP to form Tyr-AMP and then transferred to the acceptor end of tRNA(Tyr). This chain is Tyrosine--tRNA ligase, found in Shigella dysenteriae serotype 1 (strain Sd197).